A 559-amino-acid chain; its full sequence is Dihydroxy-acid dehydratase (559 aa).

Position 78 (Asp-78) interacts with Mg(2+). Cys-119 provides a ligand contact to [2Fe-2S] cluster. Residues Asp-120 and Lys-121 each contribute to the Mg(2+) site. At Lys-121 the chain carries N6-carboxylysine. Cys-192 contacts [2Fe-2S] cluster. Glu-446 is a binding site for Mg(2+). The Proton acceptor role is filled by Ser-472.

This sequence belongs to the IlvD/Edd family. As to quaternary structure, homodimer. [2Fe-2S] cluster serves as cofactor. It depends on Mg(2+) as a cofactor.

The catalysed reaction is (2R)-2,3-dihydroxy-3-methylbutanoate = 3-methyl-2-oxobutanoate + H2O. The enzyme catalyses (2R,3R)-2,3-dihydroxy-3-methylpentanoate = (S)-3-methyl-2-oxopentanoate + H2O. It participates in amino-acid biosynthesis; L-isoleucine biosynthesis; L-isoleucine from 2-oxobutanoate: step 3/4. The protein operates within amino-acid biosynthesis; L-valine biosynthesis; L-valine from pyruvate: step 3/4. Functions in the biosynthesis of branched-chain amino acids. Catalyzes the dehydration of (2R,3R)-2,3-dihydroxy-3-methylpentanoate (2,3-dihydroxy-3-methylvalerate) into 2-oxo-3-methylpentanoate (2-oxo-3-methylvalerate) and of (2R)-2,3-dihydroxy-3-methylbutanoate (2,3-dihydroxyisovalerate) into 2-oxo-3-methylbutanoate (2-oxoisovalerate), the penultimate precursor to L-isoleucine and L-valine, respectively. This is Dihydroxy-acid dehydratase from Wolinella succinogenes (strain ATCC 29543 / DSM 1740 / CCUG 13145 / JCM 31913 / LMG 7466 / NCTC 11488 / FDC 602W) (Vibrio succinogenes).